The sequence spans 76 residues: Beta-defensin 121 (76 aa).

Positions 1 to 15 (MKLLLLLLTVTLLLA) are cleaved as a signal peptide. 3 disulfide bridges follow: C23–C50, C30–C44, and C34–C51.

Belongs to the beta-defensin family. As to expression, abundant expression in the male reproductive tract only.

The protein resides in the secreted. In terms of biological role, has antibacterial activity. The protein is Beta-defensin 121 (DEFB121) of Macaca mulatta (Rhesus macaque).